The following is a 91-amino-acid chain: Protein SPATA45 homolog (91 aa).

The interval R42–Y91 is disordered. Over residues G51 to D70 the composition is skewed to polar residues. Residues P76–Y91 are compositionally biased toward basic and acidic residues.

It belongs to the SPATA45 family.

This is Protein SPATA45 homolog from Nematostella vectensis (Starlet sea anemone).